Here is a 195-residue protein sequence, read N- to C-terminus: NADH-quinone oxidoreductase subunit B (195 aa).

4 residues coordinate [4Fe-4S] cluster: cysteine 74, cysteine 75, cysteine 139, and cysteine 169.

The protein belongs to the complex I 20 kDa subunit family. In terms of assembly, NDH-1 is composed of 14 different subunits. Subunits NuoB, C, D, E, F, and G constitute the peripheral sector of the complex. [4Fe-4S] cluster serves as cofactor.

It localises to the cell inner membrane. It catalyses the reaction a quinone + NADH + 5 H(+)(in) = a quinol + NAD(+) + 4 H(+)(out). Its function is as follows. NDH-1 shuttles electrons from NADH, via FMN and iron-sulfur (Fe-S) centers, to quinones in the respiratory chain. The immediate electron acceptor for the enzyme in this species is believed to be ubiquinone. Couples the redox reaction to proton translocation (for every two electrons transferred, four hydrogen ions are translocated across the cytoplasmic membrane), and thus conserves the redox energy in a proton gradient. This chain is NADH-quinone oxidoreductase subunit B, found in Methylobacterium sp. (strain 4-46).